Consider the following 392-residue polypeptide: Pannexin-3 (392 aa).

Residues 1-39 (MSLAHTAAEYMLSDALLPDRRGSRLKGLRLELPLDKMVK) are Cytoplasmic-facing. A helical membrane pass occupies residues 40–60 (FVTVGFPLLLMSLAFAQEFSS). Residues 61 to 113 (GSPISCFSPSNFSVRQAVFVDSSCWDSLAHYKQDEAGQYTVKSLWPHKALPYS) lie on the Extracellular side of the membrane. A glycan (N-linked (GlcNAc...) asparagine) is linked at Asn71. The helical transmembrane segment at 114-134 (LLALAVAMYLPVLLWQYAAVP) threads the bilayer. Residues 135–215 (ALSSDLLFII…VATYLLRNAL (81 aa)) lie on the Cytoplasmic side of the membrane. A helical membrane pass occupies residues 216-236 (LLLFTSATYLYLGHFHLDVFF). Over 237–267 (QEEFSCSIKTGLLHEETHVPELITCRLTSLS) the chain is Extracellular. A helical transmembrane segment spans residues 268–288 (VFQIVSVSSVAIYTVLVPVII). The Cytoplasmic segment spans residues 289–392 (YNLTRLCRWD…LTQHTYDEHP (104 aa)).

The protein belongs to the pannexin family. Homoheptameric. As to expression, skin.

The protein resides in the cell membrane. It localises to the cell junction. Its subcellular location is the gap junction. It is found in the endoplasmic reticulum membrane. It catalyses the reaction Ca(2+)(in) = Ca(2+)(out). It carries out the reaction ATP(in) = ATP(out). Its function is as follows. Regulator of osteoblast differentiation by functionning as a Ca(2+) channel in the endoplasmic reticulum which regulates calmodulin (CaM) pathways. Allows ATP release into the extracellular space and activation or purinergic receptors. This chain is Pannexin-3 (Panx3), found in Rattus norvegicus (Rat).